Reading from the N-terminus, the 90-residue chain is Small ribosomal subunit protein bS20 (90 aa).

The interval 1–25 (MANSAQARKRARQAAKANSHNSALR) is disordered.

The protein belongs to the bacterial ribosomal protein bS20 family.

Functionally, binds directly to 16S ribosomal RNA. This is Small ribosomal subunit protein bS20 from Burkholderia orbicola (strain MC0-3).